The sequence spans 205 residues: Urease accessory protein UreE (205 aa).

Residues 171–205 (AHEAHPHAHSHAGGHGHVHSGHGHGGKHGEHDAES) are disordered. Positions 177–196 (HAHSHAGGHGHVHSGHGHGG) are enriched in basic residues.

This sequence belongs to the UreE family.

The protein resides in the cytoplasm. Functionally, involved in urease metallocenter assembly. Binds nickel. Probably functions as a nickel donor during metallocenter assembly. The chain is Urease accessory protein UreE from Bordetella bronchiseptica (strain ATCC BAA-588 / NCTC 13252 / RB50) (Alcaligenes bronchisepticus).